A 158-amino-acid chain; its full sequence is ATP synthase subunit beta, mitochondrial (158 aa).

It belongs to the ATPase alpha/beta chains family. In terms of assembly, F-type ATPases have 2 components, CF(1) - the catalytic core - and CF(0) - the membrane proton channel. CF(1) has five subunits: alpha(3), beta(3), gamma(1), delta(1), epsilon(1). CF(0) has three main subunits: a, b and c.

The protein localises to the mitochondrion. It is found in the mitochondrion inner membrane. The enzyme catalyses ATP + H2O + 4 H(+)(in) = ADP + phosphate + 5 H(+)(out). In terms of biological role, mitochondrial membrane ATP synthase (F(1)F(0) ATP synthase or Complex V) produces ATP from ADP in the presence of a proton gradient across the membrane which is generated by electron transport complexes of the respiratory chain. F-type ATPases consist of two structural domains, F(1) - containing the extramembraneous catalytic core, and F(0) - containing the membrane proton channel, linked together by a central stalk and a peripheral stalk. During catalysis, ATP synthesis in the catalytic domain of F(1) is coupled via a rotary mechanism of the central stalk subunits to proton translocation. Subunits alpha and beta form the catalytic core in F(1). Rotation of the central stalk against the surrounding alpha(3)beta(3) subunits leads to hydrolysis of ATP in three separate catalytic sites on the beta subunits. This is ATP synthase subunit beta, mitochondrial from Schizaphis graminum (Green bug aphid).